The chain runs to 128 residues: MTKTPETTKKAIAHGNYVRGSASKVRRVLDQIRGRSYRDALIMLEFMPYRSTDPITKVLRSAVANAEHNLGMDPSTLVISSAWANSGPVMKRYRPRAQGRAFSIKKQTCHISISVESAPTETNAEVQN.

It belongs to the universal ribosomal protein uL22 family. In terms of assembly, part of the 50S ribosomal subunit.

Its function is as follows. This protein binds specifically to 23S rRNA; its binding is stimulated by other ribosomal proteins, e.g. L4, L17, and L20. It is important during the early stages of 50S assembly. It makes multiple contacts with different domains of the 23S rRNA in the assembled 50S subunit and ribosome. In terms of biological role, the globular domain of the protein is located near the polypeptide exit tunnel on the outside of the subunit, while an extended beta-hairpin is found that lines the wall of the exit tunnel in the center of the 70S ribosome. The polypeptide is Large ribosomal subunit protein uL22 (Prochlorococcus marinus (strain AS9601)).